We begin with the raw amino-acid sequence, 730 residues long: Elongation factor 2 (730 aa).

Positions 19–229 (LMIRNIGIVA…GVSFSEVFNY (211 aa)) constitute a tr-type G domain. GTP contacts are provided by residues 28–35 (AHIDHGKT), 94–98 (DTPGH), and 148–151 (NKVD). At histidine 596 the chain carries Diphthamide.

Belongs to the TRAFAC class translation factor GTPase superfamily. Classic translation factor GTPase family. EF-G/EF-2 subfamily.

Its subcellular location is the cytoplasm. Functionally, catalyzes the GTP-dependent ribosomal translocation step during translation elongation. During this step, the ribosome changes from the pre-translocational (PRE) to the post-translocational (POST) state as the newly formed A-site-bound peptidyl-tRNA and P-site-bound deacylated tRNA move to the P and E sites, respectively. Catalyzes the coordinated movement of the two tRNA molecules, the mRNA and conformational changes in the ribosome. This is Elongation factor 2 (fusA) from Methanococcoides burtonii (strain DSM 6242 / NBRC 107633 / OCM 468 / ACE-M).